Here is a 908-residue protein sequence, read N- to C-terminus: Glutamate receptor ionotropic, kainate 2 (908 aa).

Residues 1–31 (MKIIFPILSNPVFRRTVKLLLCLLWIGYSQG) form the signal peptide. Residues 32–561 (TTHVLRFGGI…VFSFLNPLSP (530 aa)) are Extracellular-facing. Asn-67, Asn-73, Asn-275, Asn-378, Asn-412, Asn-423, and Asn-430 each carry an N-linked (GlcNAc...) asparagine glycan. Cys-96 and Cys-347 are disulfide-bonded. Positions 516, 518, and 523 each coordinate L-glutamate. N-linked (GlcNAc...) asparagine glycosylation occurs at Asn-546. A helical membrane pass occupies residues 562–582 (DIWMYILLAYLGVSCVLFVIA). Over 583–635 (RFSPYEWYNPHPCNPDSDVVENNFTLLNSFWFGVGALMQQGSELMPKALSTRI) the chain is Cytoplasmic. Residues 636 to 656 (VGGIWWFFTLIIISSYTANLA) form a helical membrane-spanning segment. At 657–819 (AFLTVERMES…KEASALGVQN (163 aa)) the chain is on the extracellular side. The L-glutamate site is built by Ala-689, Thr-690, and Glu-738. Cys-750 and Cys-804 are disulfide-bonded. An N-linked (GlcNAc...) asparagine glycan is attached at Asn-751. A helical membrane pass occupies residues 820 to 840 (IGGIFIVLAAGLVLSVFVAVG). The Cytoplasmic segment spans residues 841-908 (EFLYKSKKNA…RRLPGKETMA (68 aa)). Phosphoserine; by PKC is present on residues Ser-846 and Ser-868. A Glycyl lysine isopeptide (Lys-Gly) (interchain with G-Cter in SUMO1) cross-link involves residue Lys-886.

It belongs to the glutamate-gated ion channel (TC 1.A.10.1) family. GRIK2 subfamily. In terms of assembly, homotetramer and heterotetramer with GRIK5. Tetramers may be formed by the dimerization of dimers. Assembles into a kainate-gated homomeric channel that does not bind AMPA. Can form functional heteromeric receptors with GRIK5. Can form functional heteromeric receptors with GRIK3 and GRIK4. Interacts with DLG4. Interacts with NETO2. Interacts (via C-terminus) with KLHL17 (via kelch repeats); the interaction targets GRIK2 for degradation via ubiquitin-proteasome pathway. Post-translationally, sumoylation mediates kainate receptor-mediated endocytosis and regulates synaptic transmission. Sumoylation is enhanced by PIAS3 and desumoylated by SENP1. Ubiquitinated. Ubiquitination regulates the GRIK2 levels at the synapse by leading kainate receptor degradation through proteasome. In terms of processing, phosphorylated by PKC at Ser-868 upon agonist activation, this directly enhance sumoylation. As to expression, expression is higher in cerebellum than in cerebral cortex.

It localises to the cell membrane. It is found in the postsynaptic cell membrane. The enzyme catalyses Ca(2+)(in) = Ca(2+)(out). The catalysed reaction is Na(+)(in) = Na(+)(out). Cold receptor activity activated by temperatures between 10-19 degrees Celsius. Ionotropic glutamate receptor that functions as a cation permeable ligand-gated ion channel, gated by L-glutamate and the glutamatergic agonist kainic acid. L-glutamate acts as an excitatory neurotransmitter at many synapses in the central nervous system. Binding of the excitatory neurotransmitter L-glutamate induces a conformation change, leading to the opening of the cation channel, and thereby converts the chemical signal to an electrical impulse. The receptor then desensitizes rapidly and enters a transient inactive state, characterized by the presence of bound agonist. Modulates cell surface expression of NETO2. In association with GRIK3, involved in presynaptic facilitation of glutamate release at hippocampal mossy fiber synapses. Its function is as follows. Independent of its ionotropic glutamate receptor activity, acts as a thermoreceptor conferring sensitivity to cold temperatures. Functions in dorsal root ganglion neurons. This Homo sapiens (Human) protein is Glutamate receptor ionotropic, kainate 2 (GRIK2).